A 26-amino-acid chain; its full sequence is Melittin (26 aa).

Gly-1 carries the post-translational modification N-formylglycine; partial. The residue at position 26 (Gln-26) is a Glutamine amide.

This sequence belongs to the melittin family. In terms of assembly, monomer (in solution and for integration into membranes), homotetramer (in solution and potentially as a toroidal pore in membranes), and potenially homomultimer (as a toroidal pore in membranes). As to expression, expressed by the venom gland.

It localises to the secreted. The protein resides in the target cell membrane. Functionally, main toxin of bee venom with strong hemolytic activity and antimicrobial activity. It has enhancing effects on bee venom phospholipase A2 activity. This amphipathic toxin binds to negatively charged membrane surface and forms pore by inserting into lipid bilayers inducing the leakage of ions and molecules and the enhancement of permeability that ultimately leads to cell lysis. It acts as a voltage-gated pore with higher selectivity for anions over cations. The ion conductance has been shown to be voltage-dependent. Self-association of melittin in membranes is promoted by high ionic strength, but not by the presence of negatively charged lipids. In vivo, intradermal injection into healthy human volunteers produce sharp pain sensation and an inflammatory response. It produces pain by activating primary nociceptor cells directly and indirectly due to its ability to activate plasma membrane phospholipase A2 and its pore-forming activity. This is Melittin (MELT) from Apis florea (Dwarf honeybee).